A 348-amino-acid chain; its full sequence is 3-isopropylmalate dehydrogenase (348 aa).

Residue 76–87 coordinates NAD(+); sequence GPKWTDPNNRPE. Substrate-binding residues include R94, R104, R132, and D217. D217, D241, and D245 together coordinate Mg(2+). 275-287 contacts NAD(+); sequence GSAPDIAGKNVAN.

The protein belongs to the isocitrate and isopropylmalate dehydrogenases family. LeuB type 1 subfamily. Homodimer. It depends on Mg(2+) as a cofactor. The cofactor is Mn(2+).

The protein localises to the cytoplasm. The catalysed reaction is (2R,3S)-3-isopropylmalate + NAD(+) = 4-methyl-2-oxopentanoate + CO2 + NADH. The protein operates within amino-acid biosynthesis; L-leucine biosynthesis; L-leucine from 3-methyl-2-oxobutanoate: step 3/4. Catalyzes the oxidation of 3-carboxy-2-hydroxy-4-methylpentanoate (3-isopropylmalate) to 3-carboxy-4-methyl-2-oxopentanoate. The product decarboxylates to 4-methyl-2 oxopentanoate. The protein is 3-isopropylmalate dehydrogenase of Staphylococcus aureus (strain Mu50 / ATCC 700699).